The primary structure comprises 49 residues: Large ribosomal subunit protein bL33B (49 aa).

Belongs to the bacterial ribosomal protein bL33 family.

This is Large ribosomal subunit protein bL33B from Bacillus velezensis (strain DSM 23117 / BGSC 10A6 / LMG 26770 / FZB42) (Bacillus amyloliquefaciens subsp. plantarum).